A 66-amino-acid polypeptide reads, in one-letter code: Large ribosomal subunit protein bL35 (66 aa).

Residues 1 to 26 (MPKMKTHRGAAKRVKRTASGKLKRSR) show a composition bias toward basic residues. The interval 1-49 (MPKMKTHRGAAKRVKRTASGKLKRSRAFTSHLFANKSTKQKRKLRKASL) is disordered.

Belongs to the bacterial ribosomal protein bL35 family.

This chain is Large ribosomal subunit protein bL35, found in Staphylococcus carnosus (strain TM300).